The sequence spans 111 residues: uncharacterized protein (111 aa).

It to A.fulgidus AF1864.

This is an uncharacterized protein from Aquifex aeolicus (strain VF5).